A 92-amino-acid chain; its full sequence is Cell division protein FtsB (92 aa).

Over 1-3 (MRL) the chain is Cytoplasmic. A helical membrane pass occupies residues 4 to 21 (LILILLSVLVLFQYNFWF). The Periplasmic segment spans residues 22–92 (GSNGFLDYRQ…VFYHIVKESK (71 aa)). A coiled-coil region spans residues 28-63 (DYRQNAEKIKENQAENEKLSQRNQRINAEIQGLTKG).

It belongs to the FtsB family. In terms of assembly, part of a complex composed of FtsB, FtsL and FtsQ.

It is found in the cell inner membrane. Its function is as follows. Essential cell division protein. May link together the upstream cell division proteins, which are predominantly cytoplasmic, with the downstream cell division proteins, which are predominantly periplasmic. This Haemophilus influenzae (strain 86-028NP) protein is Cell division protein FtsB.